A 953-amino-acid chain; its full sequence is Valine--tRNA ligase (953 aa).

The 'HIGH' region motif lies at 42-52; sequence PNVTGSLHMGH. The short motif at 554–558 is the 'KMSKS' region element; that stretch reads KMSKS. Lys557 is a binding site for ATP. A coiled-coil region spans residues 884 to 952; that stretch reads LIDKDAELDR…LEQQKATIAA (69 aa).

This sequence belongs to the class-I aminoacyl-tRNA synthetase family. ValS type 1 subfamily. In terms of assembly, monomer.

The protein localises to the cytoplasm. The catalysed reaction is tRNA(Val) + L-valine + ATP = L-valyl-tRNA(Val) + AMP + diphosphate. In terms of biological role, catalyzes the attachment of valine to tRNA(Val). As ValRS can inadvertently accommodate and process structurally similar amino acids such as threonine, to avoid such errors, it has a 'posttransfer' editing activity that hydrolyzes mischarged Thr-tRNA(Val) in a tRNA-dependent manner. The protein is Valine--tRNA ligase of Vibrio cholerae serotype O1 (strain ATCC 39315 / El Tor Inaba N16961).